A 239-amino-acid polypeptide reads, in one-letter code: Transmembrane emp24 domain-containing protein 6 (239 aa).

Positions 1-21 are cleaved as a signal peptide; it reads MFPLLLVAELVVLSLVTSVKS. Residues 22–200 are Lumenal-facing; the sequence is QETDPLHGSK…FFLLQSNYTY (179 aa). The GOLD domain occupies 53–138; sequence IECFWQFADQ…SIQVYLNFGV (86 aa). N-linked (GlcNAc...) asparagine glycosylation is found at Asn-156 and Asn-197. Residues 201-223 traverse the membrane as a helical segment; it reads VNWWSTAQSLAIVLSGALQLYFL. Residues 224–239 lie on the Cytoplasmic side of the membrane; that stretch reads KRLFTASTTDTKKPRC.

Belongs to the EMP24/GP25L family.

It localises to the endoplasmic reticulum membrane. This chain is Transmembrane emp24 domain-containing protein 6 (Tmed6), found in Mus musculus (Mouse).